Reading from the N-terminus, the 347-residue chain is N-acetyl-gamma-glutamyl-phosphate reductase (347 aa).

Cys-153 is an active-site residue.

This sequence belongs to the NAGSA dehydrogenase family. Type 1 subfamily.

It localises to the cytoplasm. It carries out the reaction N-acetyl-L-glutamate 5-semialdehyde + phosphate + NADP(+) = N-acetyl-L-glutamyl 5-phosphate + NADPH + H(+). The protein operates within amino-acid biosynthesis; L-arginine biosynthesis; N(2)-acetyl-L-ornithine from L-glutamate: step 3/4. Functionally, catalyzes the NADPH-dependent reduction of N-acetyl-5-glutamyl phosphate to yield N-acetyl-L-glutamate 5-semialdehyde. The sequence is that of N-acetyl-gamma-glutamyl-phosphate reductase from Mycobacterium leprae (strain Br4923).